Here is a 203-residue protein sequence, read N- to C-terminus: Small ribosomal subunit protein uS4 (203 aa).

The tract at residues 20 to 45 (LPGLTRKRPKNTNPPGMHGAERKKKS) is disordered. One can recognise an S4 RNA-binding domain in the interval 92-155 (MRLDCIVFRL…SSRKLVAAYA (64 aa)).

Belongs to the universal ribosomal protein uS4 family. As to quaternary structure, part of the 30S ribosomal subunit. Contacts protein S5. The interaction surface between S4 and S5 is involved in control of translational fidelity.

In terms of biological role, one of the primary rRNA binding proteins, it binds directly to 16S rRNA where it nucleates assembly of the body of the 30S subunit. Its function is as follows. With S5 and S12 plays an important role in translational accuracy. The protein is Small ribosomal subunit protein uS4 of Synechococcus sp. (strain JA-3-3Ab) (Cyanobacteria bacterium Yellowstone A-Prime).